Consider the following 150-residue polypeptide: Large ribosomal subunit protein bL9 (150 aa).

This sequence belongs to the bacterial ribosomal protein bL9 family.

Functionally, binds to the 23S rRNA. This is Large ribosomal subunit protein bL9 from Streptococcus agalactiae serotype Ia (strain ATCC 27591 / A909 / CDC SS700).